Reading from the N-terminus, the 284-residue chain is Digeranylgeranylglyceryl phosphate synthase (284 aa).

The next 7 membrane-spanning stretches (helical) occupy residues 10 to 30, 37 to 57, 76 to 98, 102 to 119, 126 to 146, 217 to 237, and 260 to 280; these read IHNV…SSMW, LILA…INDV, AVSL…ILSA, YLQF…IFYA, GIYG…YGGL, LPLF…FLYI, and GSAF…QFLF.

Belongs to the UbiA prenyltransferase family. DGGGP synthase subfamily. Mg(2+) is required as a cofactor.

The protein resides in the cell membrane. It catalyses the reaction sn-3-O-(geranylgeranyl)glycerol 1-phosphate + (2E,6E,10E)-geranylgeranyl diphosphate = 2,3-bis-O-(geranylgeranyl)-sn-glycerol 1-phosphate + diphosphate. It functions in the pathway membrane lipid metabolism; glycerophospholipid metabolism. Its function is as follows. Prenyltransferase that catalyzes the transfer of the geranylgeranyl moiety of geranylgeranyl diphosphate (GGPP) to the C2 hydroxyl of (S)-3-O-geranylgeranylglyceryl phosphate (GGGP). This reaction is the second ether-bond-formation step in the biosynthesis of archaeal membrane lipids. In Metallosphaera sedula (strain ATCC 51363 / DSM 5348 / JCM 9185 / NBRC 15509 / TH2), this protein is Digeranylgeranylglyceryl phosphate synthase.